Consider the following 331-residue polypeptide: C4-dicarboxylate-binding periplasmic protein DctP (331 aa).

Positions 1–23 (MLKHTAKALVCALSLTVAGIVQA) are cleaved as a signal peptide.

Belongs to the bacterial solute-binding protein 7 family. The complex comprises the extracytoplasmic solute receptor protein DctP, and the two transmembrane proteins DctQ and DctM.

Its subcellular location is the periplasm. In terms of biological role, part of the tripartite ATP-independent periplasmic (TRAP) transport system DctPQM involved in C4-dicarboxylates uptake. The polypeptide is C4-dicarboxylate-binding periplasmic protein DctP (Pseudomonas aeruginosa (strain ATCC 15692 / DSM 22644 / CIP 104116 / JCM 14847 / LMG 12228 / 1C / PRS 101 / PAO1)).